A 722-amino-acid polypeptide reads, in one-letter code: BTB/POZ domain-containing protein 9 (722 aa).

Positions 46-112 (ADVEFIVEEE…IYSGTLLLST (67 aa)) constitute a BTB domain. The BACK domain maps to 151-247 (CMILDAARLY…MNLEHLLQVV (97 aa)). Residues 565–593 (QDKNYLKKIADMEKEREKREKEKKTAKTD) are a coiled coil. The segment covering 577 to 594 (EKEREKREKEKKTAKTDD) has biased composition (basic and acidic residues). 2 disordered regions span residues 577 to 626 (EKER…VLRS) and 640 to 722 (PLTP…RETL). The segment covering 597-606 (IASTSGSSLA) has biased composition (polar residues). Over residues 607–626 (SGHAESPSTSSSSSQSVLRS) the composition is skewed to low complexity. A compositionally biased stretch (pro residues) spans 641 to 658 (LTPPALSPPGTPALPAPL). Over residues 670–679 (EQNQPSNISA) the composition is skewed to polar residues. Residues 686-704 (SPSSRSNPSPSLSRSRSQS) show a composition bias toward low complexity.

As to expression, detected in the brain (at protein level).

Its subcellular location is the cytoplasm. Its function is as follows. Essential for the homeostatic regulation of sleep and motor activity, by depressing hyperactivity and wakefulness. May function, at least in part, by ensuring dopamine biosynthesis. This is BTB/POZ domain-containing protein 9 from Drosophila melanogaster (Fruit fly).